A 340-amino-acid chain; its full sequence is Glyceraldehyde-3-phosphate dehydrogenase (340 aa).

NAD(+)-binding positions include 12–13, Asp40, Lys85, and Ser128; that span reads RI. D-glyceraldehyde 3-phosphate-binding positions include 158–160, Thr189, Arg204, 217–218, and Arg240; these read SCT and TG. Residue Cys159 is the Nucleophile of the active site. An Isoglutamyl lysine isopeptide (Lys-Gln) (interchain with Q-Cter in protein Pup) cross-link involves residue Lys257. Asn321 contributes to the NAD(+) binding site.

This sequence belongs to the glyceraldehyde-3-phosphate dehydrogenase family. In terms of assembly, homotetramer.

It is found in the cytoplasm. The catalysed reaction is D-glyceraldehyde 3-phosphate + phosphate + NAD(+) = (2R)-3-phospho-glyceroyl phosphate + NADH + H(+). It participates in carbohydrate degradation; glycolysis; pyruvate from D-glyceraldehyde 3-phosphate: step 1/5. In terms of biological role, catalyzes the oxidative phosphorylation of glyceraldehyde 3-phosphate (G3P) to 1,3-bisphosphoglycerate (BPG) using the cofactor NAD. The first reaction step involves the formation of a hemiacetal intermediate between G3P and a cysteine residue, and this hemiacetal intermediate is then oxidized to a thioester, with concomitant reduction of NAD to NADH. The reduced NADH is then exchanged with the second NAD, and the thioester is attacked by a nucleophilic inorganic phosphate to produce BPG. This Mycolicibacterium smegmatis (strain ATCC 700084 / mc(2)155) (Mycobacterium smegmatis) protein is Glyceraldehyde-3-phosphate dehydrogenase (gapA).